The primary structure comprises 284 residues: 4-hydroxy-3-methylbut-2-enyl diphosphate reductase (284 aa).

Cys-12 lines the [4Fe-4S] cluster pocket. Positions 40 and 76 each coordinate (2E)-4-hydroxy-3-methylbut-2-enyl diphosphate. Positions 40 and 76 each coordinate dimethylallyl diphosphate. The isopentenyl diphosphate site is built by His-40 and His-76. A [4Fe-4S] cluster-binding site is contributed by Cys-98. His-126 lines the (2E)-4-hydroxy-3-methylbut-2-enyl diphosphate pocket. Residue His-126 participates in dimethylallyl diphosphate binding. An isopentenyl diphosphate-binding site is contributed by His-126. The active-site Proton donor is the Glu-128. Thr-161 provides a ligand contact to (2E)-4-hydroxy-3-methylbut-2-enyl diphosphate. A [4Fe-4S] cluster-binding site is contributed by Cys-191. Positions 219, 220, 221, and 263 each coordinate (2E)-4-hydroxy-3-methylbut-2-enyl diphosphate. Residues Ser-219, Ser-220, Asn-221, and Ser-263 each contribute to the dimethylallyl diphosphate site. Isopentenyl diphosphate-binding residues include Ser-219, Ser-220, Asn-221, and Ser-263.

It belongs to the IspH family. It depends on [4Fe-4S] cluster as a cofactor.

It carries out the reaction isopentenyl diphosphate + 2 oxidized [2Fe-2S]-[ferredoxin] + H2O = (2E)-4-hydroxy-3-methylbut-2-enyl diphosphate + 2 reduced [2Fe-2S]-[ferredoxin] + 2 H(+). It catalyses the reaction dimethylallyl diphosphate + 2 oxidized [2Fe-2S]-[ferredoxin] + H2O = (2E)-4-hydroxy-3-methylbut-2-enyl diphosphate + 2 reduced [2Fe-2S]-[ferredoxin] + 2 H(+). Its pathway is isoprenoid biosynthesis; dimethylallyl diphosphate biosynthesis; dimethylallyl diphosphate from (2E)-4-hydroxy-3-methylbutenyl diphosphate: step 1/1. It participates in isoprenoid biosynthesis; isopentenyl diphosphate biosynthesis via DXP pathway; isopentenyl diphosphate from 1-deoxy-D-xylulose 5-phosphate: step 6/6. Catalyzes the conversion of 1-hydroxy-2-methyl-2-(E)-butenyl 4-diphosphate (HMBPP) into a mixture of isopentenyl diphosphate (IPP) and dimethylallyl diphosphate (DMAPP). Acts in the terminal step of the DOXP/MEP pathway for isoprenoid precursor biosynthesis. The chain is 4-hydroxy-3-methylbut-2-enyl diphosphate reductase from Petrotoga mobilis (strain DSM 10674 / SJ95).